We begin with the raw amino-acid sequence, 645 residues long: Acetyl-coenzyme A synthetase (645 aa).

CoA-binding positions include 190-193 (RGGR), threonine 309, and asparagine 333. Residues 385–387 (GEP), 409–414 (DTWWQT), aspartate 498, and arginine 513 contribute to the ATP site. Position 521 (serine 521) interacts with CoA. Arginine 524 lines the ATP pocket. Mg(2+)-binding residues include valine 535, histidine 537, and valine 540. Arginine 582 contributes to the CoA binding site. N6-acetyllysine is present on lysine 607.

Belongs to the ATP-dependent AMP-binding enzyme family. Mg(2+) is required as a cofactor. Post-translationally, acetylated. Deacetylation by the SIR2-homolog deacetylase activates the enzyme.

It carries out the reaction acetate + ATP + CoA = acetyl-CoA + AMP + diphosphate. Functionally, catalyzes the conversion of acetate into acetyl-CoA (AcCoA), an essential intermediate at the junction of anabolic and catabolic pathways. AcsA undergoes a two-step reaction. In the first half reaction, AcsA combines acetate with ATP to form acetyl-adenylate (AcAMP) intermediate. In the second half reaction, it can then transfer the acetyl group from AcAMP to the sulfhydryl group of CoA, forming the product AcCoA. This chain is Acetyl-coenzyme A synthetase, found in Beijerinckia indica subsp. indica (strain ATCC 9039 / DSM 1715 / NCIMB 8712).